The sequence spans 591 residues: Heterogeneous nuclear ribonucleoprotein L-like (591 aa).

The tract at residues 1–120 (MSSSSSSSPK…STEGGGSHHK (120 aa)) is disordered. Positions 20–31 (FESQAKRLKTEE) are enriched in basic and acidic residues. Lys-28 is covalently cross-linked (Glycyl lysine isopeptide (Lys-Gly) (interchain with G-Cter in SUMO2)). Ser-37 carries the phosphoserine modification. Position 48 is a phosphothreonine (Thr-48). The span at 57 to 73 (SGGGDGGDGDGGSGGGG) shows a compositional bias: gly residues. Over residues 74–91 (DGEEGEGGEEGDEGDGDE) the composition is skewed to acidic residues. Residues 92-105 (GGSGGDEGGSGGGP) are compositionally biased toward gly residues. Phosphoserine occurs at positions 107, 117, and 124. 3 consecutive RRM domains span residues 125 to 199 (PVVH…YSTS), 215 to 293 (NKVL…YARP), and 384 to 458 (SVVM…VSKQ). A Glycyl lysine isopeptide (Lys-Gly) (interchain with G-Cter in SUMO2) cross-link involves residue Lys-540.

In terms of assembly, interacts with HNRNPL.

Functionally, RNA-binding protein that functions as a regulator of alternative splicing for multiple target mRNAs, including PTPRC/CD45 and STAT5A. Required for alternative splicing of PTPRC. The chain is Heterogeneous nuclear ribonucleoprotein L-like (Hnrnpll) from Mus musculus (Mouse).